The following is a 252-amino-acid chain: 3-dehydroquinate dehydratase (252 aa).

Residues Ser21, 46–48 (EWR), and Arg82 each bind 3-dehydroquinate. His143 (proton donor/acceptor) is an active-site residue. The Schiff-base intermediate with substrate role is filled by Lys170. 3 residues coordinate 3-dehydroquinate: Arg213, Ser232, and Gln236.

It belongs to the type-I 3-dehydroquinase family. As to quaternary structure, homodimer.

It catalyses the reaction 3-dehydroquinate = 3-dehydroshikimate + H2O. It participates in metabolic intermediate biosynthesis; chorismate biosynthesis; chorismate from D-erythrose 4-phosphate and phosphoenolpyruvate: step 3/7. In terms of biological role, involved in the third step of the chorismate pathway, which leads to the biosynthesis of aromatic amino acids. Catalyzes the cis-dehydration of 3-dehydroquinate (DHQ) and introduces the first double bond of the aromatic ring to yield 3-dehydroshikimate. In Shigella sonnei (strain Ss046), this protein is 3-dehydroquinate dehydratase.